The primary structure comprises 256 residues: Acetyl-coenzyme A carboxylase carboxyl transferase subunit alpha (256 aa).

Residues 1–236 (MTKITRIIKE…KEEIAAELDS (236 aa)) enclose the CoA carboxyltransferase C-terminal domain.

The protein belongs to the AccA family. As to quaternary structure, acetyl-CoA carboxylase is a heterohexamer composed of biotin carboxyl carrier protein (AccB), biotin carboxylase (AccC) and two subunits each of ACCase subunit alpha (AccA) and ACCase subunit beta (AccD).

It is found in the cytoplasm. The catalysed reaction is N(6)-carboxybiotinyl-L-lysyl-[protein] + acetyl-CoA = N(6)-biotinyl-L-lysyl-[protein] + malonyl-CoA. The protein operates within lipid metabolism; malonyl-CoA biosynthesis; malonyl-CoA from acetyl-CoA: step 1/1. Component of the acetyl coenzyme A carboxylase (ACC) complex. First, biotin carboxylase catalyzes the carboxylation of biotin on its carrier protein (BCCP) and then the CO(2) group is transferred by the carboxyltransferase to acetyl-CoA to form malonyl-CoA. This Streptococcus sanguinis (strain SK36) protein is Acetyl-coenzyme A carboxylase carboxyl transferase subunit alpha.